A 288-amino-acid polypeptide reads, in one-letter code: MRLSIIEIINSMFSIRLFSPAKINLFLKVIGKRADGYHELSSLFQTISAGDILTFQRQTIDTLTCSDPYLPTDDSNLVLKAMRLFRSKTGLDLHLRIHLDKRLPSQAGLGGGSSNAATTLWACNQLAGEIVTTEELMQWGSEIGADIPFFFSKGTAHCTGRGECVNSLEPLAHCKIWIVKPPFGLSTPEVYKHLNFSQPNENNNDYASFKEKPYFNDLEASAFEIKPELKILKNTLLSSGFDTVLMSGSGSSFFCIGQGQIPASFKAFSAYFINRSSNRWYSTLPKLT.

Residue Lys-22 is part of the active site. 104 to 114 (PSQAGLGGGSS) is a binding site for ATP. Residue Asp-146 is part of the active site.

The protein belongs to the GHMP kinase family. IspE subfamily.

The catalysed reaction is 4-CDP-2-C-methyl-D-erythritol + ATP = 4-CDP-2-C-methyl-D-erythritol 2-phosphate + ADP + H(+). It functions in the pathway isoprenoid biosynthesis; isopentenyl diphosphate biosynthesis via DXP pathway; isopentenyl diphosphate from 1-deoxy-D-xylulose 5-phosphate: step 3/6. Functionally, catalyzes the phosphorylation of the position 2 hydroxy group of 4-diphosphocytidyl-2C-methyl-D-erythritol. This is 4-diphosphocytidyl-2-C-methyl-D-erythritol kinase from Protochlamydia amoebophila (strain UWE25).